The primary structure comprises 211 residues: Large ribosomal subunit protein uL4 (211 aa).

The segment covering 41 to 53 (QAHSRQGTASTLT) has biased composition (polar residues). The disordered stretch occupies residues 41 to 78 (QAHSRQGTASTLTRAEVRGGGRKPYKQKGTGRARQGTI). A compositionally biased stretch (basic residues) spans 60 to 71 (GGRKPYKQKGTG).

Belongs to the universal ribosomal protein uL4 family. In terms of assembly, part of the 50S ribosomal subunit.

Functionally, one of the primary rRNA binding proteins, this protein initially binds near the 5'-end of the 23S rRNA. It is important during the early stages of 50S assembly. It makes multiple contacts with different domains of the 23S rRNA in the assembled 50S subunit and ribosome. Forms part of the polypeptide exit tunnel. The protein is Large ribosomal subunit protein uL4 of Prochlorococcus marinus (strain MIT 9303).